The chain runs to 118 residues: Cytochrome b-c1 complex subunit 7 (118 aa).

Residues Met-1–Tyr-32 form an igE-binding. Immunodominant epitope; induces specific IgE antibody production in mice. Causes degranulation of rat basophilic leukemia (RBL) cells and the release of beta-hexosaminidase from them region.

The protein belongs to the UQCRB/QCR7 family. Component of the ubiquinol-cytochrome c oxidoreductase (cytochrome b-c1 complex, complex III, CIII), a multisubunit enzyme composed of 3 respiratory subunits cytochrome b, cytochrome c1 and Rieske protein, 2 core protein subunits, and additional low-molecular weight protein subunits. The complex exists as an obligatory dimer and forms supercomplexes (SCs) in the inner mitochondrial membrane with cytochrome c oxidase (complex IV, CIV).

The protein localises to the mitochondrion inner membrane. Its function is as follows. Component of the ubiquinol-cytochrome c oxidoreductase, a multisubunit transmembrane complex that is part of the mitochondrial electron transport chain which drives oxidative phosphorylation. The respiratory chain contains 3 multisubunit complexes succinate dehydrogenase (complex II, CII), ubiquinol-cytochrome c oxidoreductase (cytochrome b-c1 complex, complex III, CIII) and cytochrome c oxidase (complex IV, CIV), that cooperate to transfer electrons derived from NADH and succinate to molecular oxygen, creating an electrochemical gradient over the inner membrane that drives transmembrane transport and the ATP synthase. The cytochrome b-c1 complex catalyzes electron transfer from ubiquinol to cytochrome c, linking this redox reaction to translocation of protons across the mitochondrial inner membrane, with protons being carried across the membrane as hydrogens on the quinol. In the process called Q cycle, 2 protons are consumed from the matrix, 4 protons are released into the intermembrane space and 2 electrons are passed to cytochrome c. The polypeptide is Cytochrome b-c1 complex subunit 7 (Dermatophagoides pteronyssinus (European house dust mite)).